A 552-amino-acid chain; its full sequence is Urocanate hydratase (552 aa).

NAD(+)-binding positions include 49–50 (GG), Gln-127, 173–175 (GMG), Asp-193, 239–240 (NA), 260–264 (QTSAH), 270–271 (YI), and Tyr-319. Cys-407 is an active-site residue. Gly-489 serves as a coordination point for NAD(+).

Belongs to the urocanase family. It depends on NAD(+) as a cofactor.

It is found in the cytoplasm. The catalysed reaction is 4-imidazolone-5-propanoate = trans-urocanate + H2O. Its pathway is amino-acid degradation; L-histidine degradation into L-glutamate; N-formimidoyl-L-glutamate from L-histidine: step 2/3. In terms of biological role, catalyzes the conversion of urocanate to 4-imidazolone-5-propionate. The sequence is that of Urocanate hydratase from Bacillus cereus (strain AH187).